Here is a 159-residue protein sequence, read N- to C-terminus: MIDPDGFRPNVGIILTNDAGQVLWARRINQDAWQFPQGGINPDETPEDALYRELNEEVGLEREDVQILACTRGWLRYRLPQRLVRTHSQPLCIGQKQKWFLLRLISNEQRVRMDLTGKPEFDGWRWVSYWYPLGQVVTFKREVYRRALKELAPRLLARD.

In terms of domain architecture, Nudix hydrolase spans 6–149 (GFRPNVGIIL…KREVYRRALK (144 aa)). The short motif at 38–59 (GGINPDETPEDALYRELNEEVG) is the Nudix box element.

This sequence belongs to the Nudix hydrolase family. RppH subfamily. It depends on a divalent metal cation as a cofactor.

Accelerates the degradation of transcripts by removing pyrophosphate from the 5'-end of triphosphorylated RNA, leading to a more labile monophosphorylated state that can stimulate subsequent ribonuclease cleavage. This is RNA pyrophosphohydrolase from Pseudomonas fluorescens (strain SBW25).